The following is a 186-amino-acid chain: Lipid A palmitoyltransferase PagP (186 aa).

The first 25 residues, 1 to 25, serve as a signal peptide directing secretion; sequence MKVSKYVAIFFFVFIQLISVGKVFA. Active-site residues include His58, Asp101, and Ser102.

It belongs to the lipid A palmitoyltransferase family. Homodimer.

Its subcellular location is the cell outer membrane. It catalyses the reaction lipid A (E. coli) + a 1-hexadecanoyl-2-acyl-sn-glycero-3-phosphocholine = hepta-acyl lipid A (E. coli) + a 2-acyl-sn-glycero-3-phosphocholine. The catalysed reaction is lipid IIA + a 1-hexadecanoyl-2-acyl-sn-glycero-3-phosphocholine = lipid IIB + a 2-acyl-sn-glycero-3-phosphocholine. The enzyme catalyses lipid IVA (E. coli) + a 1-hexadecanoyl-2-acyl-sn-glycero-3-phosphocholine = lipid IVB (E. coli) + a 2-acyl-sn-glycero-3-phosphocholine. Transfers a palmitate residue from the sn-1 position of a phospholipid to the N-linked hydroxymyristate on the proximal unit of lipid A or its precursors. This is Lipid A palmitoyltransferase PagP from Escherichia coli O6:K15:H31 (strain 536 / UPEC).